The sequence spans 456 residues: Histidine--tRNA ligase (456 aa).

The protein belongs to the class-II aminoacyl-tRNA synthetase family. Homodimer.

The protein localises to the cytoplasm. It carries out the reaction tRNA(His) + L-histidine + ATP = L-histidyl-tRNA(His) + AMP + diphosphate + H(+). The polypeptide is Histidine--tRNA ligase (hisS) (Borreliella burgdorferi (strain ATCC 35210 / DSM 4680 / CIP 102532 / B31) (Borrelia burgdorferi)).